Reading from the N-terminus, the 656-residue chain is Nuclear pore complex protein Nup85 (656 aa).

Position 1 is an N-acetylmethionine (Met-1). Position 92 is an N6-acetyllysine (Lys-92). The residue at position 223 (Ser-223) is a Phosphoserine.

This sequence belongs to the nucleoporin Nup85 family. As to quaternary structure, component of the nuclear pore complex (NPC). Component of the NPC Nup107-160 subcomplex, consisting of at least NUP107, NUP98/Nup96, NUP160, NUP133, NUP85, NUP37, NUP43 and SEC13. Interacts with NUP160, NUP133 and SEC13. Interacts with NUP37, NUP107 and NUP43. Interacts with CCR2.

It localises to the nucleus. Its subcellular location is the nuclear pore complex. It is found in the chromosome. The protein localises to the centromere. The protein resides in the kinetochore. It localises to the cytoplasm. Its subcellular location is the cytoskeleton. It is found in the spindle. The protein localises to the nucleus membrane. Essential component of the nuclear pore complex (NPC) that seems to be required for NPC assembly and maintenance. As part of the NPC Nup107-160 subcomplex plays a role in RNA export and in tethering NUP96/Nup98 and NUP153 to the nucleus. The Nup107-160 complex seems to be required for spindle assembly during mitosis. NUP85 is required for membrane clustering of CCL2-activated CCR2. Seems to be involved in CCR2-mediated chemotaxis of monocytes and may link activated CCR2 to the phosphatidyl-inositol 3-kinase-Rac-lammellipodium protrusion cascade. Involved in nephrogenesis. The sequence is that of Nuclear pore complex protein Nup85 (NUP85) from Homo sapiens (Human).